The sequence spans 283 residues: NAD kinase (283 aa).

Catalysis depends on aspartate 67, which acts as the Proton acceptor. NAD(+) contacts are provided by residues 67–68, arginine 72, 136–137, lysine 147, arginine 164, aspartate 166, 177–182, and glutamine 236; these read DG, NE, and TAYSMS.

Belongs to the NAD kinase family. The cofactor is a divalent metal cation.

It localises to the cytoplasm. It catalyses the reaction NAD(+) + ATP = ADP + NADP(+) + H(+). Functionally, involved in the regulation of the intracellular balance of NAD and NADP, and is a key enzyme in the biosynthesis of NADP. Catalyzes specifically the phosphorylation on 2'-hydroxyl of the adenosine moiety of NAD to yield NADP. The protein is NAD kinase of Methanothermobacter thermautotrophicus (strain ATCC 29096 / DSM 1053 / JCM 10044 / NBRC 100330 / Delta H) (Methanobacterium thermoautotrophicum).